The primary structure comprises 399 residues: Formate-dependent phosphoribosylglycinamide formyltransferase (399 aa).

Residues 8 to 9 (EL) and Glu-68 each bind N(1)-(5-phospho-beta-D-ribosyl)glycinamide. Residues Arg-100, Lys-141, 146–151 (SSGHGQ), 185–188 (EALA), and Glu-193 each bind ATP. In terms of domain architecture, ATP-grasp spans 105-308 (VLAHEELGLP…EFALHARAIL (204 aa)). Residues Glu-266 and Glu-279 each contribute to the Mg(2+) site. N(1)-(5-phospho-beta-D-ribosyl)glycinamide-binding positions include Asp-286, Lys-361, and 368–369 (RR).

It belongs to the PurK/PurT family. As to quaternary structure, homodimer.

The catalysed reaction is N(1)-(5-phospho-beta-D-ribosyl)glycinamide + formate + ATP = N(2)-formyl-N(1)-(5-phospho-beta-D-ribosyl)glycinamide + ADP + phosphate + H(+). It functions in the pathway purine metabolism; IMP biosynthesis via de novo pathway; N(2)-formyl-N(1)-(5-phospho-D-ribosyl)glycinamide from N(1)-(5-phospho-D-ribosyl)glycinamide (formate route): step 1/1. Functionally, involved in the de novo purine biosynthesis. Catalyzes the transfer of formate to 5-phospho-ribosyl-glycinamide (GAR), producing 5-phospho-ribosyl-N-formylglycinamide (FGAR). Formate is provided by PurU via hydrolysis of 10-formyl-tetrahydrofolate. The sequence is that of Formate-dependent phosphoribosylglycinamide formyltransferase from Bifidobacterium longum (strain NCC 2705).